The chain runs to 597 residues: Kelch-like protein 21 (597 aa).

Residues Leu-35 to Gly-103 enclose the BTB domain. The BACK domain maps to Cys-138–Glu-239. Kelch repeat units lie at residues Ile-287–Asn-335, Asp-336–Gly-382, Leu-384–Gly-422, Arg-423–Gly-470, Met-472–Gly-512, and Lys-513–Arg-560. Positions Gly-570 to Gln-597 are disordered.

As to quaternary structure, component of the BCR(KLHL21) E3 ubiquitin ligase complex, at least composed of CUL3, KLHL21 and RBX1.

It is found in the cytoplasm. Its subcellular location is the cytoskeleton. It localises to the spindle. It participates in protein modification; protein ubiquitination. In terms of biological role, substrate-specific adapter of BCR (BTB-CUL3-RBX1) E3 ubiquitin-protein ligase complex required for efficient chromosome alignment and cytokinesis. The BCR(KLHL21) E3 ubiquitin ligase complex regulates localization of the chromosomal passenger complex (CPC) from chromosomes to the spindle midzone in anaphase and mediates the ubiquitination of AURKB. Ubiquitination of AURKB by BCR(KLHL21) E3 ubiquitin ligase complex may not lead to its degradation by the proteasome. The polypeptide is Kelch-like protein 21 (Klhl21) (Rattus norvegicus (Rat)).